Reading from the N-terminus, the 406-residue chain is NIPA-like protein 3 (406 aa).

The next 4 membrane-spanning stretches (helical) occupy residues 33–53, 76–96, 101–121, and 135–155; these read NLIG…ALNL, WWLG…SYAF, LIVP…IIFI, and ILSF…VTFA. Asn166 is a glycosylation site (N-linked (GlcNAc...) asparagine). Helical transmembrane passes span 171-191, 202-222, 240-260, 271-291, and 300-320; these read LVSW…CLLL, IVVI…TVKA, PIFY…AAFL, LIAS…GAIF, and VLHI…VFLI. Ser372 carries the phosphoserine modification.

This sequence belongs to the NIPA family.

The protein resides in the membrane. The chain is NIPA-like protein 3 (NIPAL3) from Pongo abelii (Sumatran orangutan).